The sequence spans 287 residues: tRNA (guanine(9)-N1)-methyltransferase (287 aa).

Residues 1-27 (MSDTSDLVDGKWQRLPPVPEGMSKSQW) are disordered. Positions 79–272 (EPRVNRDQVA…SVIPSRKLDP (194 aa)) constitute an SAM-dependent MTase TRM10-type domain. S-adenosyl-L-methionine contacts are provided by residues 179–180 (LT), Gly-199, 203–207 (DKNRH), Cys-211, Leu-225, and 237–239 (KVL). Asp-203 acts as the Proton acceptor in catalysis. The span at 268–278 (RKLDPVKEKEQ) shows a compositional bias: basic and acidic residues. Residues 268–287 (RKLDPVKEKEQQQQQQQQQQ) are disordered.

The protein belongs to the class IV-like SAM-binding methyltransferase superfamily. TRM10 family. As to quaternary structure, monomer.

The protein localises to the cytoplasm. It is found in the nucleus. The enzyme catalyses guanosine(9) in tRNA + S-adenosyl-L-methionine = N(1)-methylguanosine(9) in tRNA + S-adenosyl-L-homocysteine + H(+). Its function is as follows. S-adenosyl-L-methionine-dependent guanine N(1)-methyltransferase that catalyzes the formation of N(1)-methylguanine at position 9 (m1G9) in cytoplasmic tRNA. The chain is tRNA (guanine(9)-N1)-methyltransferase from Candida glabrata (strain ATCC 2001 / BCRC 20586 / JCM 3761 / NBRC 0622 / NRRL Y-65 / CBS 138) (Yeast).